The sequence spans 413 residues: Putative competence-damage inducible protein (413 aa).

This sequence belongs to the CinA family.

The protein is Putative competence-damage inducible protein of Acetivibrio thermocellus (strain ATCC 27405 / DSM 1237 / JCM 9322 / NBRC 103400 / NCIMB 10682 / NRRL B-4536 / VPI 7372) (Clostridium thermocellum).